A 399-amino-acid chain; its full sequence is MQPMTARFDLFVVGSGFFGLTIAERVATQLDKRVLVLERRPHIGGNAYSEAEPQTGIEVHKYGAHLFHTSNKRVWDYVRQFTDFTDYRHRVFAMHNGQAYQFPMGLGLVSQFFGKYFTPEQARQLIAEQAAEIDTADAQNLEEKAISLIGRPLYEAFVKGYTAKQWQTDPKELPAANITRLPVRYTFDNRYFSDTYEGLPTDGYTAWLQNMAADHRIEVRLNTDWFDVRGQLRPGSPAAPVVYTGPLDRYFDYAEGRLGWRTLDFEVEVLPIGDFQGTAVMNYNDLDVPYTRIHEFRHFHPERDYPTDKTVIMREYSRFAEDDDEPYYPINTEADRALLATYRARAKSETASSKVLFGGRLGTYQYLDMHMAIASALNMYDNVLAPHLRDGVPLLQDGA.

4 residues coordinate FAD: Phe-18, Glu-38, Asn-46, and Leu-66. The UDP-alpha-D-galactose site is built by Phe-157, Thr-162, Trp-166, and Tyr-191. 224-225 contributes to the FAD binding site; the sequence is DW. UDP-alpha-D-galactose is bound by residues Asn-282, Arg-292, and Tyr-328. Arg-360 serves as a coordination point for FAD. Residue Tyr-366 participates in UDP-alpha-D-galactose binding. Residue 367 to 369 participates in FAD binding; the sequence is LDM.

Belongs to the UDP-galactopyranose/dTDP-fucopyranose mutase family. Homotetramer. Requires FAD as cofactor.

It carries out the reaction UDP-alpha-D-galactose = UDP-alpha-D-galactofuranose. It participates in cell wall biogenesis; cell wall polysaccharide biosynthesis. Catalyzes the interconversion through a 2-keto intermediate of uridine diphosphogalactopyranose (UDP-GalP) into uridine diphosphogalactofuranose (UDP-GalF) which is a key building block for cell wall construction in Mycobacterium tuberculosis. In Mycobacterium tuberculosis (strain CDC 1551 / Oshkosh), this protein is UDP-galactopyranose mutase (glf).